The chain runs to 589 residues: Sentrin-specific protease 2 (589 aa).

The Nuclear localization signal signature appears at 28-31 (KRRR). Ser-32 is modified (phosphoserine). The short motif at 46-51 (PAKRPR) is the Nuclear localization signal element. Residues 71 to 382 (GFPFQLTTKP…EKEISNALGH (312 aa)) form an axin-binding region. 2 disordered regions span residues 148–179 (SFGF…LMWK) and 191–210 (EESG…GVQK). The Nuclear export signal motif lies at 317-332 (LEPDLSEEVSARLRLG). Phosphoserine occurs at positions 333 and 344. The protease stretch occupies residues 395 to 559 (LRITRGDIQT…MFTCKYADYI (165 aa)). Catalysis depends on residues His-478 and Asp-495. Cys-548 acts as the Nucleophile in catalysis.

This sequence belongs to the peptidase C48 family. Binds to SUMO2 and SUMO3. Interacts with the C-terminal domain of NUP153 via its N-terminus. Interacts with MTA1. Polyubiquitinated; which leads to proteasomal degradation.

The protein resides in the nucleus. It is found in the nuclear pore complex. It localises to the nucleus membrane. The protein localises to the cytoplasm. Functionally, protease that catalyzes two essential functions in the SUMO pathway. The first is the hydrolysis of an alpha-linked peptide bond at the C-terminal end of the small ubiquitin-like modifier (SUMO) propeptides, SUMO1, SUMO2 and SUMO3 leading to the mature form of the proteins. The second is the deconjugation of SUMO1, SUMO2 and SUMO3 from targeted proteins, by cleaving an epsilon-linked peptide bond between the C-terminal glycine of the mature SUMO and the lysine epsilon-amino group of the target protein. May down-regulate CTNNB1 levels and thereby modulate the Wnt pathway. Deconjugates SUMO2 from MTA1. Plays a dynamic role in adipogenesis by desumoylating and promoting the stabilization of CEBPB. Acts as a regulator of the cGAS-STING pathway by catalyzing desumoylation of CGAS and STING1 during the late phase of viral infection. In Pongo abelii (Sumatran orangutan), this protein is Sentrin-specific protease 2 (SENP2).